The following is a 296-amino-acid chain: ATP synthase gamma chain (296 aa).

The tract at residues 194-216 (IPASAGQAANDNAGSDQPAGDYE) is disordered.

This sequence belongs to the ATPase gamma chain family. As to quaternary structure, F-type ATPases have 2 components, CF(1) - the catalytic core - and CF(0) - the membrane proton channel. CF(1) has five subunits: alpha(3), beta(3), gamma(1), delta(1), epsilon(1). CF(0) has three main subunits: a, b and c.

It localises to the cell inner membrane. Produces ATP from ADP in the presence of a proton gradient across the membrane. The gamma chain is believed to be important in regulating ATPase activity and the flow of protons through the CF(0) complex. In Acidiphilium cryptum (strain JF-5), this protein is ATP synthase gamma chain.